The sequence spans 391 residues: Large envelope protein (391 aa).

At methionine 1 the chain carries N-acetylmethionine. Glycine 2 carries the N-myristoyl glycine; by host lipid modification. Positions 2-108 are pre-S1; sequence GLNQSTFNPL…PPLRDTHPQA (107 aa). The interval 2 to 163 is pre-S; that stretch reads GLNQSTFNPL…FSTTGVPVST (162 aa). At 2–170 the chain is on the virion surface; in external conformation side; that stretch reads GLNQSTFNPL…VSTMDITSSG (169 aa). Topologically, residues 2–242 are intravirion; in internal conformation; it reads GLNQSTFNPL…PGYRWMCLRR (241 aa). The interval 73-107 is disordered; that stretch reads LSVTVPDTPPPPSTNRDKGRKPTPATPPLRDTHPQ. The tract at residues 109 to 163 is pre-S2; that stretch reads MTWNTSSFQSYLQNPKVRGLYFPAGGSTSSIVNPVPTTASTTSSSFSTTGVPVST. A helical membrane pass occupies residues 171 to 191; sequence FLGPLLALQAVFFLLTKILTM. The Intravirion; in external conformation portion of the chain corresponds to 192-242; sequence PQSLDSLWTSLNFLGGTPACPGLNSQSPTSSHSPTCCPPTCPGYRWMCLRR. The chain crosses the membrane as a helical span at residues 243–263; the sequence is SIIFLFILLLCLIFLLVLLDY. Over 264-339 the chain is Virion surface; it reads QGMLPVCPLL…WALARFSWLN (76 aa). Asparagine 311 carries N-linked (GlcNAc...) asparagine; by host glycosylation. A helical transmembrane segment spans residues 340–360; that stretch reads SLLPFVQWFAGLSPTVWLLVI. The Intravirion segment spans residues 361–366; it reads WMMWFW. Residues 367–389 form a helical membrane-spanning segment; the sequence is GPSLFSILSPFLPLLPLFFWLWA. At 390 to 391 the chain is on the virion surface side; it reads YI.

This sequence belongs to the orthohepadnavirus major surface antigen family. In its internal form (Li-HBsAg), interacts with the capsid protein and with the isoform S. Interacts with host chaperone CANX. In terms of assembly, associates with host chaperone CANX through its pre-S2 N glycan; this association may be essential for isoform M proper secretion. As to quaternary structure, interacts with isoform L. Interacts with the antigens of satellite virus HDV (HDVAgs); this interaction is required for encapsidation of HDV genomic RNA. Isoform M is N-terminally acetylated by host at a ratio of 90%, and N-glycosylated by host at the pre-S2 region. In terms of processing, myristoylated.

It localises to the virion membrane. Functionally, the large envelope protein exists in two topological conformations, one which is termed 'external' or Le-HBsAg and the other 'internal' or Li-HBsAg. In its external conformation the protein attaches the virus to cell receptors and thereby initiating infection. This interaction determines the species specificity and liver tropism. This attachment induces virion internalization predominantly through caveolin-mediated endocytosis. The large envelope protein also assures fusion between virion membrane and endosomal membrane. In its internal conformation the protein plays a role in virion morphogenesis and mediates the contact with the nucleocapsid like a matrix protein. The middle envelope protein plays an important role in the budding of the virion. It is involved in the induction of budding in a nucleocapsid independent way. In this process the majority of envelope proteins bud to form subviral lipoprotein particles of 22 nm of diameter that do not contain a nucleocapsid. This is Large envelope protein from Woolly monkey hepatitis B virus (isolate Louisville) (WMHBV).